The sequence spans 280 residues: ATP synthase subunit a (280 aa).

The next 7 membrane-spanning stretches (helical) occupy residues 45-65, 105-125, 126-146, 159-179, 190-210, 223-243, and 250-270; these read AINVDSMLFSIGLGVLFLFLF, LVAPLALTVFMWVFLMNLMDL, LPVDWLPYVATMAGIPYLKVV, LSIFFLVLYYSVKMKGAGGFF, FLFPVNLLLEGVGLIAKPISL, MIFILIALMFGGGWVLALFGG, and AVFHILIITLQAFIFMTLTIV.

Belongs to the ATPase A chain family. F-type ATPases have 2 components, CF(1) - the catalytic core - and CF(0) - the membrane proton channel. CF(1) has five subunits: alpha(3), beta(3), gamma(1), delta(1), epsilon(1). CF(0) has three main subunits: a(1), b(2) and c(9-12). The alpha and beta chains form an alternating ring which encloses part of the gamma chain. CF(1) is attached to CF(0) by a central stalk formed by the gamma and epsilon chains, while a peripheral stalk is formed by the delta and b chains.

It localises to the cell inner membrane. Functionally, key component of the proton channel; it plays a direct role in the translocation of protons across the membrane. This chain is ATP synthase subunit a, found in Thiobacillus denitrificans (strain ATCC 25259 / T1).